A 344-amino-acid polypeptide reads, in one-letter code: MTSAAITPPTTVDRPMTDPFGRTIDYLRVSITDRCDFRCVYCMAEDMTFLPRADLLTLEELDRLCSAFIAKGVRKLRLTGGEPLVRRNMMSLVRSLSRHLKTGALDELTLTTNGSQLARFAAELADCGVRRVNVSLDTLDPDEFRRITRWGDLERVLAGIDAARTAGLAVKINSVVLKGSNEDEIPSLMRWAHGLGMGLTLIEVMPLGEIGEGRIDQYVPLSLIRARLSANYTLTDLPDSTGGPARYVRVEETGGRLGFITPLTHNFCESCNRVRITCTGTIHTCLGHEDASDLRRPLRASPDDALLSAAIDQAIGSKPKGHDFIIDRRHNRPSVSRHMSVTGG.

Positions 19 to 239 constitute a Radical SAM core domain; it reads PFGRTIDYLR…ANYTLTDLPD (221 aa). Arg28 serves as a coordination point for GTP. Cys35 and Cys39 together coordinate [4Fe-4S] cluster. Tyr41 contributes to the S-adenosyl-L-methionine binding site. Cys42 is a binding site for [4Fe-4S] cluster. GTP is bound at residue Arg77. S-adenosyl-L-methionine is bound at residue Gly81. Residue Thr111 coordinates GTP. An S-adenosyl-L-methionine-binding site is contributed by Ser135. Lys171 lines the GTP pocket. Position 205 (Met205) interacts with S-adenosyl-L-methionine. [4Fe-4S] cluster contacts are provided by Cys268 and Cys271. Residue 273–275 coordinates GTP; the sequence is RVR. A [4Fe-4S] cluster-binding site is contributed by Cys285.

Belongs to the radical SAM superfamily. MoaA family. Monomer and homodimer. The cofactor is [4Fe-4S] cluster.

The enzyme catalyses GTP + AH2 + S-adenosyl-L-methionine = (8S)-3',8-cyclo-7,8-dihydroguanosine 5'-triphosphate + 5'-deoxyadenosine + L-methionine + A + H(+). The protein operates within cofactor biosynthesis; molybdopterin biosynthesis. Its function is as follows. Catalyzes the cyclization of GTP to (8S)-3',8-cyclo-7,8-dihydroguanosine 5'-triphosphate. This is GTP 3',8-cyclase from Rhodopseudomonas palustris (strain ATCC BAA-98 / CGA009).